Consider the following 256-residue polypeptide: Protein CC2D2B homolog (256 aa).

The segment at 1 to 24 (MSEEMDNVTAEEITDKHLQKDLDA) is disordered. Residues 13–22 (ITDKHLQKDL) show a composition bias toward basic and acidic residues. Coiled coils occupy residues 136–159 (DLLK…KANI) and 194–214 (EIYK…EEGK).

The chain is Protein CC2D2B homolog from Macaca fascicularis (Crab-eating macaque).